Here is a 948-residue protein sequence, read N- to C-terminus: Valine--tRNA ligase (948 aa).

The 'HIGH' region signature appears at Pro40–His50. The short motif at Lys551–Ser555 is the 'KMSKS' region element. Residue Lys554 participates in ATP binding. Residues Leu879–Ile945 adopt a coiled-coil conformation.

Belongs to the class-I aminoacyl-tRNA synthetase family. ValS type 1 subfamily. As to quaternary structure, monomer.

The protein localises to the cytoplasm. The enzyme catalyses tRNA(Val) + L-valine + ATP = L-valyl-tRNA(Val) + AMP + diphosphate. Catalyzes the attachment of valine to tRNA(Val). As ValRS can inadvertently accommodate and process structurally similar amino acids such as threonine, to avoid such errors, it has a 'posttransfer' editing activity that hydrolyzes mischarged Thr-tRNA(Val) in a tRNA-dependent manner. This is Valine--tRNA ligase from Pseudomonas savastanoi pv. phaseolicola (strain 1448A / Race 6) (Pseudomonas syringae pv. phaseolicola (strain 1448A / Race 6)).